We begin with the raw amino-acid sequence, 385 residues long: Flavin-dependent monooxygenase (385 aa).

Residues 12-15 (ASIA), 34-36 (EKN), 44-47 (YAID), Arg-105, Tyr-267, Asp-289, and 296-302 (PLSGQGT) each bind FAD.

It belongs to the aromatic-ring hydroxylase family. FAD is required as a cofactor.

It catalyses the reaction 7-chlorotetracycline + NADPH + O2 + H(+) = (1S,10S,10aS)-3-(CONH2)-9-Cl-1-(Me2N)-3,3a,4,10-(HO)4-10-Me-2,5-dioxo-1H,10aH,11H,11aH-cyclopenta[b]anthracen-6-olate + CO + NADP(+) + H2O. It carries out the reaction a tetracycline + NADPH + O2 + H(+) = a (1S,10aS)-3-(CONH2)-1-(Me2N)-3,3a,4,6-(HO)4-2,5-dioxo-1H,10aH,11H,11aH-cyclopenta[b]anthracene + CO + NADP(+) + H2O. Its activity is regulated as follows. Inhibited by anhydrotetracycline. In terms of biological role, an FAD-requiring monooxygenase active on tetracycline antibiotic and some of its derivatives, which leads to their inactivation. Expression in E.coli confers high resistance to oxytetracycline, slightly less resistance to tetracycline, moderate resistance to minocycline but no resistance to tigecycline. Degrades tetracycline and oxytetracycline; the reaction requires NADPH. Degrades and confers resistance to chlortetracycline. This chain is Flavin-dependent monooxygenase, found in Unknown prokaryotic organism.